We begin with the raw amino-acid sequence, 199 residues long: Single-stranded DNA-binding protein 2 (199 aa).

The SSB domain occupies 1–110 (MAGETVITVV…LDVDEVGASL (110 aa)). Residues 114–199 (TAKVTKTSGQ…GGGYSDEPPF (86 aa)) are disordered. Gly residues predominate over residues 123-156 (QGRGGQGGYGGGGGGQGGGGWGGGPGGGQQGGGA). Residues 157-166 (PADDPWATGG) are compositionally biased toward low complexity. A compositionally biased stretch (gly residues) spans 167–193 (APAGGQQGGGGQGGGGWGGGSGGGGGY).

Homotetramer. Post-translationally, phosphorylated on tyrosine residue(s) when expressed in E.coli.

Its subcellular location is the cytoplasm. The protein resides in the nucleoid. The sequence is that of Single-stranded DNA-binding protein 2 (ssb2) from Streptomyces coelicolor (strain ATCC BAA-471 / A3(2) / M145).